A 643-amino-acid polypeptide reads, in one-letter code: Nicastrin (643 aa).

Positions 1–20 are cleaved as a signal peptide; it reads MRFKNVLVLLLLLVFSVINS. Residues 21 to 611 lie on the Extracellular side of the membrane; that stretch reads EPSAPATISD…VFKIGNSTTE (591 aa). Cysteine 42 and cysteine 54 are joined by a disulfide. Asparagine 96 and asparagine 166 each carry an N-linked (GlcNAc...) asparagine glycan. 2 disulfides stabilise this stretch: cysteine 204-cysteine 210 and cysteine 308-cysteine 318. Residues asparagine 333 and asparagine 385 are each glycosylated (N-linked (GlcNAc...) asparagine). Disulfide bonds link cysteine 479–cysteine 486, cysteine 540–cysteine 551, and cysteine 546–cysteine 556. A glycan (N-linked (GlcNAc...) asparagine) is linked at asparagine 584. Residues 612-632 form a helical membrane-spanning segment; the sequence is IWFLVSGLIELLVSIGLILYV. Residues 633–643 lie on the Cytoplasmic side of the membrane; the sequence is KKFLSNRYKLL.

The protein belongs to the nicastrin family. In terms of assembly, component of the gamma-secretase complex, a complex composed of a presenilin homodimer, nicastrin, aph1 and pen2.

It is found in the membrane. Functionally, essential subunit of the gamma-secretase complex, an endoprotease complex that catalyzes the intramembrane cleavage of integral membrane proteins such as Notch receptors and APP (amyloid-beta precursor protein). The polypeptide is Nicastrin (Dictyostelium purpureum (Slime mold)).